The primary structure comprises 206 residues: 2,3-bisphosphoglycerate-dependent phosphoglycerate mutase (206 aa).

Substrate is bound by residues 9 to 16 (RHGQSEWN), 22 to 23 (TG), R61, 88 to 91 (ERDY), K99, 115 to 116 (RR), and 159 to 160 (GN). H10 (tele-phosphohistidine intermediate) is an active-site residue. E88 (proton donor/acceptor) is an active-site residue.

The protein belongs to the phosphoglycerate mutase family. BPG-dependent PGAM subfamily. Homodimer.

The catalysed reaction is (2R)-2-phosphoglycerate = (2R)-3-phosphoglycerate. The protein operates within carbohydrate degradation; glycolysis; pyruvate from D-glyceraldehyde 3-phosphate: step 3/5. Its function is as follows. Catalyzes the interconversion of 2-phosphoglycerate and 3-phosphoglycerate. The protein is 2,3-bisphosphoglycerate-dependent phosphoglycerate mutase of Azorhizobium caulinodans (strain ATCC 43989 / DSM 5975 / JCM 20966 / LMG 6465 / NBRC 14845 / NCIMB 13405 / ORS 571).